A 268-amino-acid polypeptide reads, in one-letter code: Exodeoxyribonuclease III (268 aa).

E34 provides a ligand contact to Mg(2+). Y109 is an active-site residue. D151, N153, and D258 together coordinate Mg(2+). Residue D151 is the Proton donor/acceptor of the active site.

This sequence belongs to the DNA repair enzymes AP/ExoA family. Monomer. Mg(2+) is required as a cofactor. Mn(2+) serves as cofactor.

It carries out the reaction Exonucleolytic cleavage in the 3'- to 5'-direction to yield nucleoside 5'-phosphates.. In terms of biological role, major apurinic-apyrimidinic endonuclease of E.coli. It removes the damaged DNA at cytosines and guanines by cleaving on the 3'-side of the AP site by a beta-elimination reaction. It exhibits 3'-5'-exonuclease, 3'-phosphomonoesterase, 3'-repair diesterase and ribonuclease H activities. The chain is Exodeoxyribonuclease III (xthA) from Salmonella typhi.